Reading from the N-terminus, the 1183-residue chain is DNA-directed RNA polymerase subunit beta (1183 aa).

Acidic residues predominate over residues 1149-1162 (DNEIEMADVDDEDA). The interval 1149–1183 (DNEIEMADVDDEDATERKVDLQQKDVPETQKETTD) is disordered. Positions 1163–1183 (TERKVDLQQKDVPETQKETTD) are enriched in basic and acidic residues.

The protein belongs to the RNA polymerase beta chain family. As to quaternary structure, the RNAP catalytic core consists of 2 alpha, 1 beta, 1 beta' and 1 omega subunit. When a sigma factor is associated with the core the holoenzyme is formed, which can initiate transcription.

The catalysed reaction is RNA(n) + a ribonucleoside 5'-triphosphate = RNA(n+1) + diphosphate. DNA-dependent RNA polymerase catalyzes the transcription of DNA into RNA using the four ribonucleoside triphosphates as substrates. This is DNA-directed RNA polymerase subunit beta from Staphylococcus haemolyticus (strain JCSC1435).